Reading from the N-terminus, the 306-residue chain is Triplex capsid protein 2 (306 aa).

It belongs to the herpesviridae TRX2 protein family. In terms of assembly, interacts with TRX1 and major capisd protein/MCP.

The protein resides in the virion. It is found in the host nucleus. Structural component of the T=16 icosahedral capsid. The capsid is composed of pentamers and hexamers of major capsid protein/MCP, which are linked together by heterotrimers called triplexes. These triplexes are formed by a single molecule of triplex protein 1/TRX1 and two copies of triplex protein 2/TRX2. Additionally, TRX1 is required for efficient transport of TRX2 to the nucleus, which is the site of capsid assembly. The protein is Triplex capsid protein 2 of Alcelaphine herpesvirus 1 (strain C500) (AlHV-1).